Consider the following 372-residue polypeptide: NAD(P)H-quinone oxidoreductase subunit 1 (372 aa).

Transmembrane regions (helical) follow at residues 27-47, 97-117, 128-148, 166-186, 204-224, 266-286, 308-328, and 347-367; these read LIWL…GVLV, LLFT…WLIV, VGVG…GLLM, AAQS…VVMM, ILSW…ICAL, VLSA…PVPV, ATGI…AILL, and FLLP…LAFP.

The protein belongs to the complex I subunit 1 family. In terms of assembly, NDH-1 is composed of at least 11 different subunits.

The protein localises to the cellular thylakoid membrane. It catalyses the reaction a plastoquinone + NADH + (n+1) H(+)(in) = a plastoquinol + NAD(+) + n H(+)(out). The enzyme catalyses a plastoquinone + NADPH + (n+1) H(+)(in) = a plastoquinol + NADP(+) + n H(+)(out). Its function is as follows. NDH-1 shuttles electrons from an unknown electron donor, via FMN and iron-sulfur (Fe-S) centers, to quinones in the respiratory and/or the photosynthetic chain. The immediate electron acceptor for the enzyme in this species is believed to be plastoquinone. Couples the redox reaction to proton translocation, and thus conserves the redox energy in a proton gradient. This chain is NAD(P)H-quinone oxidoreductase subunit 1, found in Synechococcus sp. (strain WH7803).